The following is a 423-amino-acid chain: Glutamate-1-semialdehyde 2,1-aminomutase (423 aa).

At lysine 262 the chain carries N6-(pyridoxal phosphate)lysine.

It belongs to the class-III pyridoxal-phosphate-dependent aminotransferase family. HemL subfamily. In terms of assembly, homodimer. Pyridoxal 5'-phosphate serves as cofactor.

It is found in the cytoplasm. The catalysed reaction is (S)-4-amino-5-oxopentanoate = 5-aminolevulinate. It functions in the pathway porphyrin-containing compound metabolism; protoporphyrin-IX biosynthesis; 5-aminolevulinate from L-glutamyl-tRNA(Glu): step 2/2. This Saccharophagus degradans (strain 2-40 / ATCC 43961 / DSM 17024) protein is Glutamate-1-semialdehyde 2,1-aminomutase.